The sequence spans 270 residues: tRNA pseudouridine synthase A (270 aa).

Catalysis depends on D54, which acts as the Nucleophile. Y112 serves as a coordination point for substrate.

It belongs to the tRNA pseudouridine synthase TruA family. As to quaternary structure, homodimer.

It catalyses the reaction uridine(38/39/40) in tRNA = pseudouridine(38/39/40) in tRNA. Functionally, formation of pseudouridine at positions 38, 39 and 40 in the anticodon stem and loop of transfer RNAs. This chain is tRNA pseudouridine synthase A, found in Bordetella bronchiseptica (strain ATCC BAA-588 / NCTC 13252 / RB50) (Alcaligenes bronchisepticus).